Reading from the N-terminus, the 109-residue chain is Nucleoid-associated protein APL_0075 (109 aa).

The interval 1-21 (MFGKGGLGGLMKQAQQMQERM) is disordered. Residues 10–19 (LMKQAQQMQE) are compositionally biased toward low complexity.

It belongs to the YbaB/EbfC family. Homodimer.

The protein localises to the cytoplasm. It localises to the nucleoid. Binds to DNA and alters its conformation. May be involved in regulation of gene expression, nucleoid organization and DNA protection. This is Nucleoid-associated protein APL_0075 from Actinobacillus pleuropneumoniae serotype 5b (strain L20).